Consider the following 200-residue polypeptide: 3-isopropylmalate dehydratase small subunit (200 aa).

Belongs to the LeuD family. LeuD type 1 subfamily. In terms of assembly, heterodimer of LeuC and LeuD.

The enzyme catalyses (2R,3S)-3-isopropylmalate = (2S)-2-isopropylmalate. Its pathway is amino-acid biosynthesis; L-leucine biosynthesis; L-leucine from 3-methyl-2-oxobutanoate: step 2/4. Functionally, catalyzes the isomerization between 2-isopropylmalate and 3-isopropylmalate, via the formation of 2-isopropylmaleate. The chain is 3-isopropylmalate dehydratase small subunit from Pectobacterium atrosepticum (strain SCRI 1043 / ATCC BAA-672) (Erwinia carotovora subsp. atroseptica).